We begin with the raw amino-acid sequence, 488 residues long: UDP-N-acetylmuramoyl-L-alanyl-D-glutamate--2,6-diaminopimelate ligase (488 aa).

UDP-N-acetyl-alpha-D-muramoyl-L-alanyl-D-glutamate-binding positions include L24, S26, and 41–43 (HQV). 113 to 119 (GTNGKTT) lines the ATP pocket. UDP-N-acetyl-alpha-D-muramoyl-L-alanyl-D-glutamate contacts are provided by residues N154, 155–156 (TT), S182, Q188, and R190. K222 is modified (N6-carboxylysine). Residues R386, 410–413 (DNPR), G461, and E465 each bind meso-2,6-diaminopimelate. A Meso-diaminopimelate recognition motif motif is present at residues 410–413 (DNPR).

Belongs to the MurCDEF family. MurE subfamily. Mg(2+) serves as cofactor. In terms of processing, carboxylation is probably crucial for Mg(2+) binding and, consequently, for the gamma-phosphate positioning of ATP.

Its subcellular location is the cytoplasm. It carries out the reaction UDP-N-acetyl-alpha-D-muramoyl-L-alanyl-D-glutamate + meso-2,6-diaminopimelate + ATP = UDP-N-acetyl-alpha-D-muramoyl-L-alanyl-gamma-D-glutamyl-meso-2,6-diaminopimelate + ADP + phosphate + H(+). It functions in the pathway cell wall biogenesis; peptidoglycan biosynthesis. Catalyzes the addition of meso-diaminopimelic acid to the nucleotide precursor UDP-N-acetylmuramoyl-L-alanyl-D-glutamate (UMAG) in the biosynthesis of bacterial cell-wall peptidoglycan. The polypeptide is UDP-N-acetylmuramoyl-L-alanyl-D-glutamate--2,6-diaminopimelate ligase (Haemophilus influenzae (strain ATCC 51907 / DSM 11121 / KW20 / Rd)).